Reading from the N-terminus, the 114-residue chain is Aspartate 1-decarboxylase (114 aa).

Serine 25 (schiff-base intermediate with substrate; via pyruvic acid) is an active-site residue. A Pyruvic acid (Ser) modification is found at serine 25. Threonine 57 is a binding site for substrate. The active-site Proton donor is tyrosine 58. 73–75 lines the substrate pocket; the sequence is GAA.

Belongs to the PanD family. Heterooctamer of four alpha and four beta subunits. The cofactor is pyruvate. Post-translationally, is synthesized initially as an inactive proenzyme, which is activated by self-cleavage at a specific serine bond to produce a beta-subunit with a hydroxyl group at its C-terminus and an alpha-subunit with a pyruvoyl group at its N-terminus.

The protein localises to the cytoplasm. The enzyme catalyses L-aspartate + H(+) = beta-alanine + CO2. The protein operates within cofactor biosynthesis; (R)-pantothenate biosynthesis; beta-alanine from L-aspartate: step 1/1. In terms of biological role, catalyzes the pyruvoyl-dependent decarboxylation of aspartate to produce beta-alanine. The protein is Aspartate 1-decarboxylase of Thermotoga petrophila (strain ATCC BAA-488 / DSM 13995 / JCM 10881 / RKU-1).